The sequence spans 116 residues: NADPH-dependent 7-cyano-7-deazaguanine reductase (116 aa).

Residue cysteine 31 is the Thioimide intermediate of the active site. Aspartate 38 acts as the Proton donor in catalysis. Substrate contacts are provided by residues valine 53–leucine 55 and tyrosine 72–glutamate 73.

Belongs to the GTP cyclohydrolase I family. QueF type 1 subfamily.

It is found in the cytoplasm. It carries out the reaction 7-aminomethyl-7-carbaguanine + 2 NADP(+) = 7-cyano-7-deazaguanine + 2 NADPH + 3 H(+). Its pathway is tRNA modification; tRNA-queuosine biosynthesis. Its function is as follows. Catalyzes the NADPH-dependent reduction of 7-cyano-7-deazaguanine (preQ0) to 7-aminomethyl-7-deazaguanine (preQ1). This Chlorobium phaeobacteroides (strain DSM 266 / SMG 266 / 2430) protein is NADPH-dependent 7-cyano-7-deazaguanine reductase.